The following is a 118-amino-acid chain: uncharacterized protein (118 aa).

The helical transmembrane segment at Leu-7 to Pro-27 threads the bilayer. Residues Lys-31–Asn-118 adopt a coiled-coil conformation.

It localises to the cell membrane. This is an uncharacterized protein from Bacillus subtilis (strain 168).